The following is a 626-amino-acid chain: Beta-galactosidase large subunit (626 aa).

The active-site Proton donor is Glu466. Glu534 (nucleophile) is an active-site residue.

The protein belongs to the glycosyl hydrolase 2 family. In terms of assembly, heterodimer of a large (LacL) and a small subunit (LacM).

The enzyme catalyses Hydrolysis of terminal non-reducing beta-D-galactose residues in beta-D-galactosides.. In terms of biological role, component of a beta-galactosidase that displays activity with the artificial chromogenic substrate o-nitrophenyl-beta-D-galactopyranoside (ONPG). In Leuconostoc lactis, this protein is Beta-galactosidase large subunit.